A 342-amino-acid polypeptide reads, in one-letter code: S-adenosylmethionine:tRNA ribosyltransferase-isomerase (342 aa).

It belongs to the QueA family. Monomer.

The protein localises to the cytoplasm. It carries out the reaction 7-aminomethyl-7-carbaguanosine(34) in tRNA + S-adenosyl-L-methionine = epoxyqueuosine(34) in tRNA + adenine + L-methionine + 2 H(+). It functions in the pathway tRNA modification; tRNA-queuosine biosynthesis. Transfers and isomerizes the ribose moiety from AdoMet to the 7-aminomethyl group of 7-deazaguanine (preQ1-tRNA) to give epoxyqueuosine (oQ-tRNA). The polypeptide is S-adenosylmethionine:tRNA ribosyltransferase-isomerase (Campylobacter jejuni subsp. jejuni serotype O:23/36 (strain 81-176)).